Reading from the N-terminus, the 551-residue chain is Glucans biosynthesis protein D (551 aa).

A signal peptide (tat-type signal) is located at residues 1-32 (MDRRRFIKGSMAMAAVCGTSGIASLFSQAAFA).

Belongs to the OpgD/OpgG family. In terms of processing, predicted to be exported by the Tat system. The position of the signal peptide cleavage has not been experimentally proven.

It localises to the periplasm. It participates in glycan metabolism; osmoregulated periplasmic glucan (OPG) biosynthesis. Probably involved in the control of the structural glucose backbone of osmoregulated periplasmic glucans (OPGs). This Escherichia coli O127:H6 (strain E2348/69 / EPEC) protein is Glucans biosynthesis protein D.